The sequence spans 589 residues: 5'-AMP-activated protein kinase catalytic subunit alpha-1 (589 aa).

In terms of domain architecture, Protein kinase spans 24–276 (FVIKETIGKG…VKRIVNHSWF (253 aa)). Residues 30–38 (IGKGAFGAV) and Lys53 each bind ATP. Catalysis depends on Asp147, which acts as the Proton acceptor.

It belongs to the protein kinase superfamily. CAMK Ser/Thr protein kinase family. SNF1 subfamily.

The catalysed reaction is L-seryl-[protein] + ATP = O-phospho-L-seryl-[protein] + ADP + H(+). It carries out the reaction L-threonyl-[protein] + ATP = O-phospho-L-threonyl-[protein] + ADP + H(+). Probably does not act as a sensor that couples lifespan to information about energy levels and insulin-like signals. Together with aak-2, involved in the establishment of germline stem cell (GSC) quiescence during dauer development. Plays a role in the maintenance of glycogen stores which are necessary for resistance to hyperosmotic stress. The chain is 5'-AMP-activated protein kinase catalytic subunit alpha-1 (aak-1) from Caenorhabditis elegans.